We begin with the raw amino-acid sequence, 468 residues long: 6-phosphogluconate dehydrogenase, decarboxylating (468 aa).

NADP(+) contacts are provided by residues 10-15 (GMAVMG), 33-35 (NRT), 74-76 (VQS), and N102. Residues N102 and 128-130 (SGG) each bind substrate. The active-site Proton acceptor is K182. Residue 185–186 (HN) coordinates substrate. E189 acts as the Proton donor in catalysis. Y190, K259, R286, R445, and H451 together coordinate substrate.

Belongs to the 6-phosphogluconate dehydrogenase family. In terms of assembly, homodimer.

The catalysed reaction is 6-phospho-D-gluconate + NADP(+) = D-ribulose 5-phosphate + CO2 + NADPH. It participates in carbohydrate degradation; pentose phosphate pathway; D-ribulose 5-phosphate from D-glucose 6-phosphate (oxidative stage): step 3/3. Functionally, catalyzes the oxidative decarboxylation of 6-phosphogluconate to ribulose 5-phosphate and CO(2), with concomitant reduction of NADP to NADPH. This chain is 6-phosphogluconate dehydrogenase, decarboxylating (gnd), found in Buchnera aphidicola subsp. Acyrthosiphon pisum (strain APS) (Acyrthosiphon pisum symbiotic bacterium).